The primary structure comprises 83 residues: U5-theraphotoxin-Hs1a 6 (83 aa).

The first 21 residues, 1–21 (MKTSMFLTLTGLVLLFVVCYA), serve as a signal peptide directing secretion. Residues 22–49 (SESEEKEFPKELLSSIFAADSDFKVEER) constitute a propeptide that is removed on maturation. Disulfide bonds link Cys-51–Cys-63, Cys-56–Cys-68, and Cys-62–Cys-75.

This sequence belongs to the neurotoxin 10 (Hwtx-1) family. 51 (Hntx-8) subfamily. Hntx-8 sub-subfamily. As to expression, expressed by the venom gland.

Its subcellular location is the secreted. Agglutinates erythrocytes. The protein is U5-theraphotoxin-Hs1a 6 of Cyriopagopus schmidti (Chinese bird spider).